We begin with the raw amino-acid sequence, 235 residues long: Cobalt transport protein CbiM (235 aa).

The next 6 membrane-spanning stretches (helical) occupy residues 6 to 26 (GVLPPVQCAIWFAAAAPFVVH), 43 to 63 (LLLATAGACTFLLSSIKLPSV), 85 to 105 (MAFMGLIVLIFQALLLAHGGI), 108 to 128 (LGANTFSMAIVGPWVGYGAYV), 133 to 153 (LGGPLALGIFLAMFLSDLSTY), and 181 to 201 (IFAISQIPLSVAEGILGILLF).

It belongs to the CbiM family. In terms of assembly, forms an energy-coupling factor (ECF) transporter complex composed of an ATP-binding protein (A component, CbiO), a transmembrane protein (T component, CbiQ) and 2 possible substrate-capture proteins (S components, CbiM and CbiN) of unknown stoichimetry.

The protein resides in the cell membrane. It functions in the pathway cofactor biosynthesis; adenosylcobalamin biosynthesis. Part of the energy-coupling factor (ECF) transporter complex CbiMNOQ involved in cobalt import. This chain is Cobalt transport protein CbiM, found in Propionibacterium freudenreichii subsp. shermanii (strain ATCC 9614 / DSM 4902 / CIP 103027 / NCIMB 8099 / CIRM-BIA1).